The sequence spans 342 residues: Trans-3-hydroxy-L-proline dehydratase (342 aa).

Serine 90 (proton acceptor) is an active-site residue. Residues 91 to 92, aspartate 251, and 256 to 257 each bind substrate; these read GS and GT.

It belongs to the proline racemase family.

It catalyses the reaction trans-3-hydroxy-L-proline = 1-pyrroline-2-carboxylate + H2O. Catalyzes the dehydration of trans-3-hydroxy-L-proline (t3LHyp) to Delta(1)-pyrroline-2-carboxylate (Pyr2C). Is likely involved in a degradation pathway that converts t3LHyp to L-proline, which would allow P.denitrificans to grow on t3LHyp as a sole carbon source. Displays neither proline racemase activity nor 4-hydroxyproline 2-epimerase activity. The polypeptide is Trans-3-hydroxy-L-proline dehydratase (Paracoccus denitrificans (strain Pd 1222)).